Consider the following 900-residue polypeptide: Bifunctional uridylyltransferase/uridylyl-removing enzyme (900 aa).

The uridylyltransferase stretch occupies residues 1–342 (MPQVDPELFD…PCEQPVQIQP (342 aa)). The uridylyl-removing stretch occupies residues 343–705 (LNSRFQLRDG…TTQREFESGS (363 aa)). Positions 461 to 583 (VDAHTLNLIK…VGDQTHLDYL (123 aa)) constitute an HD domain. ACT domains lie at 706-789 (QIFI…IIQR) and 816-891 (VLEV…DNGR).

The protein belongs to the GlnD family. Mg(2+) is required as a cofactor.

It catalyses the reaction [protein-PII]-L-tyrosine + UTP = [protein-PII]-uridylyl-L-tyrosine + diphosphate. The enzyme catalyses [protein-PII]-uridylyl-L-tyrosine + H2O = [protein-PII]-L-tyrosine + UMP + H(+). With respect to regulation, uridylyltransferase (UTase) activity is inhibited by glutamine, while glutamine activates uridylyl-removing (UR) activity. Its function is as follows. Modifies, by uridylylation and deuridylylation, the PII regulatory proteins (GlnB and homologs), in response to the nitrogen status of the cell that GlnD senses through the glutamine level. Under low glutamine levels, catalyzes the conversion of the PII proteins and UTP to PII-UMP and PPi, while under higher glutamine levels, GlnD hydrolyzes PII-UMP to PII and UMP (deuridylylation). Thus, controls uridylylation state and activity of the PII proteins, and plays an important role in the regulation of nitrogen assimilation and metabolism. This chain is Bifunctional uridylyltransferase/uridylyl-removing enzyme, found in Pseudomonas aeruginosa (strain UCBPP-PA14).